The following is a 473-amino-acid chain: Probable glycine dehydrogenase (decarboxylating) subunit 2 (473 aa).

K266 is modified (N6-(pyridoxal phosphate)lysine).

This sequence belongs to the GcvP family. C-terminal subunit subfamily. The glycine cleavage system is composed of four proteins: P, T, L and H. In this organism, the P 'protein' is a heterodimer of two subunits. Requires pyridoxal 5'-phosphate as cofactor.

It catalyses the reaction N(6)-[(R)-lipoyl]-L-lysyl-[glycine-cleavage complex H protein] + glycine + H(+) = N(6)-[(R)-S(8)-aminomethyldihydrolipoyl]-L-lysyl-[glycine-cleavage complex H protein] + CO2. Its function is as follows. The glycine cleavage system catalyzes the degradation of glycine. The P protein binds the alpha-amino group of glycine through its pyridoxal phosphate cofactor; CO(2) is released and the remaining methylamine moiety is then transferred to the lipoamide cofactor of the H protein. This chain is Probable glycine dehydrogenase (decarboxylating) subunit 2, found in Thermus thermophilus (strain ATCC BAA-163 / DSM 7039 / HB27).